The following is a 985-amino-acid chain: Disease resistance protein At4g27190 (985 aa).

Residues 24 to 88 (ANAIKFKSNV…ISKARLKLEE (65 aa)) adopt a coiled-coil conformation. In terms of domain architecture, NB-ARC spans 167-429 (IGVWGMGGVG…MAEGFMEELG (263 aa)). Residue 171 to 178 (GMGGVGKT) participates in ATP binding. LRR repeat units lie at residues 502-523 (SLRR…VEEF), 526-547 (KTSV…GFLQ), 551-572 (TLRI…SLLR), 575-597 (SLHS…ETLA), 598-620 (KLEL…EELK), and 621-643 (RFRH…VVSR).

The protein belongs to the disease resistance NB-LRR family.

Functionally, disease resistance protein. This is Disease resistance protein At4g27190 from Arabidopsis thaliana (Mouse-ear cress).